A 353-amino-acid chain; its full sequence is Methylthioribose-1-phosphate isomerase (353 aa).

Residues 51–53, Arg94, and Gln203 each bind substrate; that span reads RGA. Catalysis depends on Asp244, which acts as the Proton donor. 254-255 is a binding site for substrate; it reads NK.

This sequence belongs to the eIF-2B alpha/beta/delta subunits family. MtnA subfamily.

The enzyme catalyses 5-(methylsulfanyl)-alpha-D-ribose 1-phosphate = 5-(methylsulfanyl)-D-ribulose 1-phosphate. The protein operates within amino-acid biosynthesis; L-methionine biosynthesis via salvage pathway; L-methionine from S-methyl-5-thio-alpha-D-ribose 1-phosphate: step 1/6. Catalyzes the interconversion of methylthioribose-1-phosphate (MTR-1-P) into methylthioribulose-1-phosphate (MTRu-1-P). The protein is Methylthioribose-1-phosphate isomerase of Nostoc punctiforme (strain ATCC 29133 / PCC 73102).